Here is a 502-residue protein sequence, read N- to C-terminus: ATP synthase subunit alpha (502 aa).

ATP is bound at residue 169-176 (GDRQTGKT).

This sequence belongs to the ATPase alpha/beta chains family. As to quaternary structure, F-type ATPases have 2 components, CF(1) - the catalytic core - and CF(0) - the membrane proton channel. CF(1) has five subunits: alpha(3), beta(3), gamma(1), delta(1), epsilon(1). CF(0) has three main subunits: a(1), b(2) and c(9-12). The alpha and beta chains form an alternating ring which encloses part of the gamma chain. CF(1) is attached to CF(0) by a central stalk formed by the gamma and epsilon chains, while a peripheral stalk is formed by the delta and b chains.

The protein resides in the cell inner membrane. The enzyme catalyses ATP + H2O + 4 H(+)(in) = ADP + phosphate + 5 H(+)(out). Produces ATP from ADP in the presence of a proton gradient across the membrane. The alpha chain is a regulatory subunit. This Desulfovibrio desulfuricans (strain ATCC 27774 / DSM 6949 / MB) protein is ATP synthase subunit alpha.